We begin with the raw amino-acid sequence, 321 residues long: Transaldolase (321 aa).

Catalysis depends on Lys-132, which acts as the Schiff-base intermediate with substrate.

Belongs to the transaldolase family. Type 1 subfamily. Homodimer.

It localises to the cytoplasm. The catalysed reaction is D-sedoheptulose 7-phosphate + D-glyceraldehyde 3-phosphate = D-erythrose 4-phosphate + beta-D-fructose 6-phosphate. It functions in the pathway carbohydrate degradation; pentose phosphate pathway; D-glyceraldehyde 3-phosphate and beta-D-fructose 6-phosphate from D-ribose 5-phosphate and D-xylulose 5-phosphate (non-oxidative stage): step 2/3. Functionally, transaldolase is important for the balance of metabolites in the pentose-phosphate pathway. The protein is Transaldolase of Agrobacterium fabrum (strain C58 / ATCC 33970) (Agrobacterium tumefaciens (strain C58)).